Here is a 457-residue protein sequence, read N- to C-terminus: Aromatic amino acid permease FywP (457 aa).

The next 12 helical transmembrane spans lie at Ile16–Val36, Ser43–Gly63, Phe91–Val111, Phe114–Leu134, Ala154–Ile174, Gly205–Ile225, Gly243–Leu263, Ile292–Thr312, Asn342–Gly362, Ile373–Phe393, Val403–Ile423, and Thr424–Tyr444.

It belongs to the amino acid-polyamine-organocation (APC) superfamily. Amino acid transporter (AAT) (TC 2.A.3.1) family.

Its subcellular location is the cell membrane. Functionally, involved in phenylalanine and tyrosine uptake. Also has affinity for tryptophan. Plays no significant role in the excretion of accumulated phenylalanine. In Lactococcus lactis subsp. cremoris (strain MG1363), this protein is Aromatic amino acid permease FywP.